The following is a 180-amino-acid chain: Large ribosomal subunit protein uL5c (180 aa).

Belongs to the universal ribosomal protein uL5 family. As to quaternary structure, part of the 50S ribosomal subunit; contacts the 5S rRNA.

Its subcellular location is the plastid. The protein resides in the chloroplast. Functionally, binds 5S rRNA, forms part of the central protuberance of the 50S subunit. The chain is Large ribosomal subunit protein uL5c (rpl5) from Tupiella akineta (Green alga).